A 283-amino-acid chain; its full sequence is Protein FAM78A (283 aa).

It belongs to the FAM78 family.

The chain is Protein FAM78A (FAM78A) from Homo sapiens (Human).